Here is a 208-residue protein sequence, read N- to C-terminus: Endoplasmic reticulum vesicle protein 25 (208 aa).

An N-terminal signal peptide occupies residues 1–15 (MKFLLLLLLAPFISA). The Lumenal segment spans residues 16–177 (LRFDLKAESK…TNESTNERVR (162 aa)). Residues 28–118 (QMCIRDFVSE…KRAIELDIES (91 aa)) form the GOLD domain. A helical transmembrane segment spans residues 178-198 (NFSVLVIIVLTSLGAWQVNYL). The Cytoplasmic segment spans residues 199 to 208 (KNYFKSKHII).

Belongs to the EMP24/GP25L family.

The protein localises to the endoplasmic reticulum membrane. The protein resides in the golgi apparatus membrane. Functionally, constituent of COPII-coated endoplasmic reticulum-derived transport vesicles. Required for efficient transport of a subset of secretory proteins to the Golgi. Facilitates retrograde transport from the Golgi to the endoplasmic reticulum. The sequence is that of Endoplasmic reticulum vesicle protein 25 (ERV25) from Candida glabrata (strain ATCC 2001 / BCRC 20586 / JCM 3761 / NBRC 0622 / NRRL Y-65 / CBS 138) (Yeast).